The following is a 242-amino-acid chain: Phosphate import ATP-binding protein PstB 1 (242 aa).

The ABC transporter domain maps to 1 to 237; sequence MDLYYGSYRA…PKDQRTEDYI (237 aa). Residue 28–35 participates in ATP binding; that stretch reads GPSGCGKS.

The protein belongs to the ABC transporter superfamily. Phosphate importer (TC 3.A.1.7) family. The complex is composed of two ATP-binding proteins (PstB), two transmembrane proteins (PstC and PstA) and a solute-binding protein (PstS).

The protein localises to the cell membrane. The catalysed reaction is phosphate(out) + ATP + H2O = ADP + 2 phosphate(in) + H(+). In terms of biological role, part of the ABC transporter complex PstSACB involved in phosphate import. Responsible for energy coupling to the transport system. This is Phosphate import ATP-binding protein PstB 1 from Symbiobacterium thermophilum (strain DSM 24528 / JCM 14929 / IAM 14863 / T).